The following is a 143-amino-acid chain: NADH-quinone oxidoreductase subunit A (143 aa).

A run of 3 helical transmembrane segments spans residues 12-32 (YIVGSVFLCVFMLLCGYFLGG), 61-81 (FYLIAMIFVIFDVEGIYLYIW), and 90-110 (WIGFIEVCIFVFILLISLIYA).

Belongs to the complex I subunit 3 family. As to quaternary structure, NDH-1 is composed of 13 different subunits. Subunits NuoA, H, J, K, L, M, N constitute the membrane sector of the complex.

It localises to the cell inner membrane. The enzyme catalyses a quinone + NADH + 5 H(+)(in) = a quinol + NAD(+) + 4 H(+)(out). Its function is as follows. NDH-1 shuttles electrons from NADH, via FMN and iron-sulfur (Fe-S) centers, to quinones in the respiratory chain. The immediate electron acceptor for the enzyme in this species is believed to be ubiquinone. Couples the redox reaction to proton translocation (for every two electrons transferred, four hydrogen ions are translocated across the cytoplasmic membrane), and thus conserves the redox energy in a proton gradient. This chain is NADH-quinone oxidoreductase subunit A, found in Blochmanniella floridana.